Here is a 478-residue protein sequence, read N- to C-terminus: Sodium-coupled neutral amino acid transporter 5 (478 aa).

The tract at residues 1-20 (MAISSAEGMELQDPKMNGAL) is disordered. Residues 1-57 (MAISSAEGMELQDPKMNGALPGNAVEQEHEGFLPSHSPSPGRKPAQFMDFEGKTSFG) are Cytoplasmic-facing. Residues 58–80 (MSVFNLSNAIMGSGILGLAYAMA) form a helical membrane-spanning segment. The Extracellular portion of the chain corresponds to 81–93 (HTGILLFLALLLC). A helical membrane pass occupies residues 94–114 (IALLSSYSIHLLLTCAGVVGI). Residues 115–131 (RAYEQLGQRALGPAGKV) lie on the Cytoplasmic side of the membrane. Residues 132–152 (VVAAVICLHNVGAMSSYLFII) form a helical membrane-spanning segment. At 153–172 (KSELPLVIATFLDMDPEGDW) the chain is on the extracellular side. A helical transmembrane segment spans residues 173–193 (FLKGNLLIIIVSVLIILPLAL). The Cytoplasmic portion of the chain corresponds to 194–198 (MRHLG). A helical membrane pass occupies residues 199–219 (YLGYTSGLSLTCMLFFLISVI). The Extracellular segment spans residues 220–263 (YKKFQLGCTVGHNGTAVESKSSPSLPIHGLNTSCEAQMFTADSQ). Cysteine 227 and cysteine 253 are oxidised to a cystine. An N-linked (GlcNAc...) asparagine glycan is attached at asparagine 232. A helical membrane pass occupies residues 264-284 (MFYTVPIMAFAFVCHPEVLPI). Residues 285 to 301 (YTELCRPSKRRMQAVAN) are Cytoplasmic-facing. Residues 302-322 (VSIGAMFCMYGLTATFGYLTF) traverse the membrane as a helical segment. Topologically, residues 323–340 (YSSVEAEMLHMYSQHDLL) are extracellular. The chain crosses the membrane as a helical span at residues 341 to 361 (ILCVRLAVLLAVTLTVPVVLF). Residues 362–382 (PIRRALQQLLFPSKAFSWPRH) are Cytoplasmic-facing. A helical membrane pass occupies residues 383–403 (VAIALILLVLVNVLVICVPTI). The Extracellular segment spans residues 404-405 (RD). Residues 406–426 (IFGVIGSTSAPSLIFILPSIF) form a helical membrane-spanning segment. Residues 427-445 (YLRIVPSEVEPLYSWPKIQ) lie on the Cytoplasmic side of the membrane. Residues 446-466 (ALCFGVLGVLFMAISLGFMFA) form a helical membrane-spanning segment. At 467-478 (NWATGQSHVSGH) the chain is on the extracellular side.

Belongs to the amino acid/polyamine transporter 2 family.

Its subcellular location is the cell membrane. The catalysed reaction is L-serine(out) + Na(+)(out) + H(+)(in) = L-serine(in) + Na(+)(in) + H(+)(out). The enzyme catalyses L-alanine(out) + Na(+)(out) + H(+)(in) = L-alanine(in) + Na(+)(in) + H(+)(out). It carries out the reaction glycine(out) + Na(+)(out) + H(+)(in) = glycine(in) + Na(+)(in) + H(+)(out). It catalyses the reaction L-glutamine(out) + Na(+)(out) + H(+)(in) = L-glutamine(in) + Na(+)(in) + H(+)(out). The catalysed reaction is L-asparagine(out) + Na(+)(out) + H(+)(in) = L-asparagine(in) + Na(+)(in) + H(+)(out). The enzyme catalyses L-histidine(out) + Na(+)(out) + H(+)(in) = L-histidine(in) + Na(+)(in) + H(+)(out). It carries out the reaction L-cysteine(out) + Na(+)(out) + H(+)(in) = L-cysteine(in) + Na(+)(in) + H(+)(out). Not inhibited by lithium. Partial allosteric regulation on ions sodium binding. Functionally, symporter that cotransports neutral amino acids and sodium ions, coupled to an H(+) antiporter activity. Releases L-glutamine and glycine from astroglial cells and may participate in the glutamate/GABA-glutamine cycle and the NMDA receptors activation. In addition contributes significantly to L-glutamine uptake in retina, namely in ganglion and Mueller cells and, therefore participates in the retinal glutamate-glutamine cycle. The transport activity is pH sensitive, Li(+) tolerant, bidirectional and associated with large uncoupled fluxes of protons. The transport is electroneutral coupled to the cotransport of 1 Na(+) and the antiport of 1 H(+). May have particular importance for modulation of net hepatic glutamine flux. In Bos taurus (Bovine), this protein is Sodium-coupled neutral amino acid transporter 5.